Here is a 192-residue protein sequence, read N- to C-terminus: Putative manganese efflux pump MntP (192 aa).

Transmembrane regions (helical) follow at residues 3–23 (FSAI…VAAA), 36–56 (VLLV…IGWL), 65–85 (VQAW…GKML), 112–132 (FVLA…LPML), 136–156 (FAIS…AGLF), and 171–191 (LAGG…HLVL).

Belongs to the MntP (TC 9.B.29) family.

The protein localises to the cell inner membrane. In terms of biological role, probably functions as a manganese efflux pump. This Sorangium cellulosum (strain So ce56) (Polyangium cellulosum (strain So ce56)) protein is Putative manganese efflux pump MntP.